The following is a 413-amino-acid chain: Glucose-1-phosphate adenylyltransferase (413 aa).

Residues Tyr-102, Gly-167, 182-183, and Ser-200 contribute to the alpha-D-glucose 1-phosphate site; that span reads EK.

Belongs to the bacterial/plant glucose-1-phosphate adenylyltransferase family. As to quaternary structure, homotetramer.

The enzyme catalyses alpha-D-glucose 1-phosphate + ATP + H(+) = ADP-alpha-D-glucose + diphosphate. It functions in the pathway glycan biosynthesis; glycogen biosynthesis. Functionally, involved in the biosynthesis of ADP-glucose, a building block required for the elongation reactions to produce glycogen. Catalyzes the reaction between ATP and alpha-D-glucose 1-phosphate (G1P) to produce pyrophosphate and ADP-Glc. This Deinococcus radiodurans (strain ATCC 13939 / DSM 20539 / JCM 16871 / CCUG 27074 / LMG 4051 / NBRC 15346 / NCIMB 9279 / VKM B-1422 / R1) protein is Glucose-1-phosphate adenylyltransferase.